Consider the following 389-residue polypeptide: MALQPSPLRVAMVAGEPSGDLLAASLLDGLTSRLPAGTQYYGIGGPRMIATGFDAHFPMEKLSVRGYVEALKHIPGILGIRNELKRQLLAEPPSVFVGVDAPDFNFGLEHPLREAGIPTVHFVCPSIWAWRGGRIKKIAKAVDHMLCVFPFETALLEKAGVAASYVGHPLADEIPLVPDTLGARRALGLAQDGPIIAVLPGSRRSEIDLIGPTFFAAMEMMQHQEPNLRFVMPAATPALREMLRPLVDSHPGLALTITDGQAQLAMTAADAILVKSGTVTLEAALLKKPMVISYKVPWLTGQIMRRQGYLPYVGLPNILAGRFVVPEILQHFATPQALAEATLKQLRDETNRRTLTEIFTEMHHVLKQNTAQRAAEVVASVIEKRKGRP.

The protein belongs to the LpxB family.

It carries out the reaction a lipid X + a UDP-2-N,3-O-bis[(3R)-3-hydroxyacyl]-alpha-D-glucosamine = a lipid A disaccharide + UDP + H(+). Its pathway is bacterial outer membrane biogenesis; LPS lipid A biosynthesis. Its function is as follows. Condensation of UDP-2,3-diacylglucosamine and 2,3-diacylglucosamine-1-phosphate to form lipid A disaccharide, a precursor of lipid A, a phosphorylated glycolipid that anchors the lipopolysaccharide to the outer membrane of the cell. The protein is Lipid-A-disaccharide synthase of Paraburkholderia phytofirmans (strain DSM 17436 / LMG 22146 / PsJN) (Burkholderia phytofirmans).